The following is a 467-amino-acid chain: Mothers against decapentaplegic homolog 2 (467 aa).

Position 2 is an N-acetylserine (Ser-2). Thr-8 bears the Phosphothreonine mark. In terms of domain architecture, MH1 spans 10-176 (PVVKRLLGWK…YQRVETPVLP (167 aa)). Position 19 is an N6-acetyllysine (Lys-19). The Zn(2+) site is built by Cys-74, Cys-149, Cys-161, and His-166. Residues 207 to 217 (PAGIEPQSNYI) are compositionally biased toward polar residues. The tract at residues 207–251 (PAGIEPQSNYIPETPPPGYISEDGETSDQQLNQSMDTGSPAELSP) is disordered. Thr-220 carries the phosphothreonine modification. The short motif at 221–225 (PPPGY) is the PY-motif element. Residues 233–243 (SDQQLNQSMDT) show a composition bias toward polar residues. Ser-240 carries the phosphoserine; by CAMK2 modification. A phosphoserine mark is found at Ser-245, Ser-250, Ser-255, Ser-458, Ser-460, and Ser-464. In terms of domain architecture, MH2 spans 274 to 467 (WCSIAYYELN…SPSVRCSSMS (194 aa)). 2 positions are modified to phosphoserine; by TGFBR1: Ser-465 and Ser-467.

Belongs to the dwarfin/SMAD family. Monomer; in the absence of TGF-beta. Heterodimer; in the presence of TGF-beta. Forms a heterodimer with co-SMAD, SMAD4, in the nucleus to form the transactivation complex SMAD2/SMAD4. Found in a complex with SMAD3 and TRIM33 upon addition of TGF-beta. Identified in a complex that contains at least ZNF451, SMAD2, SMAD3 and SMAD4. Interacts (via the MH2 domain) with ZFYVE9; may form trimers with the SMAD4 co-SMAD. Interacts with TAZ/WWRT1. Interacts with FOXH1. Interacts with SNW1. Interacts with CREB-binding protein (CBP) and EP300. Interacts with SNON. Interacts with ALK4/ACVR1B. Interacts with SKOR1. Interacts with SKOR2. Interacts with PRDM16. Interacts (via MH2 domain) with LEMD3. Interacts with RBPMS. Interacts with WWP1. Interacts (dephosphorylated form, via the MH1 and MH2 domains) with RANBP3 (via its C-terminal R domain); the interaction results in the export of dephosphorylated SMAD3 out of the nucleus and termination of the TGF-beta signaling. Interacts with PDPK1 (via PH domain). Interacts with DAB2; the interactions are enhanced upon TGF-beta stimulation. Interacts with USP15. Interacts with PPP5C. Interacts with LDLRAD4 (via the SMAD interaction motif). Interacts (via MH2 domain) with PMEPA1 (via the SMAD interaction motif). Interacts with ZFHX3. Interacts with ZNF451. Interacts with SMURF2 when phosphorylated on Ser-465/467. Interacts with PPM1A. Interacts with TGF-beta. Interacts with TGFBR1. Interacts with TGIF. Interacts with SMAD3 and TRIM33. Interacts with ZNF580. Interacts with NEDD4L in response to TGF-beta. Interacts with HGS. Interacts with AIP1. Interacts with WWP1. Interacts with PML. Interacts weakly with ZNF8. Interacts (when phosphorylated) with RNF111; RNF111 acts as an enhancer of the transcriptional responses by mediating ubiquitination and degradation of SMAD2 inhibitors. Interacts with YAP1 (when phosphorylated at 'Ser-112'). Interacts when phosphorylated with IPO7; the interaction facilitates translocation of SMAD2 to the nucleus. Interacts with MTMR4; negatively regulates TGF-beta signaling through SMAD2 dephosphorylation and retention in endosomes. Post-translationally, in response to TGF-beta, phosphorylated on the C-terminal SXS motif by TGF-beta and activin type 1 receptor kinases, phosphorylation declines progressively in a KMT5A-dependent manner. Phosphorylation in this motif is required for interaction with a number of proteins including SMURF2, SNON and SMAD4 in response to TGF-beta. Dephosphorylated in this motif by PPM1A leading to disruption of the SMAD2/3-SMAD4 complex, nuclear export and termination of the TGF-beta signaling. In response to decorin, the naturally occurring inhibitor of TGF-beta signaling, phosphorylated on Ser-240 by CaMK2. Phosphorylated by MAPK3 upon EGF stimulation; which increases transcriptional activity and stability, and is blocked by calmodulin. Phosphorylated by PDPK1. In terms of processing, in response to TGF-beta, ubiquitinated by NEDD4L; which promotes its degradation. Monoubiquitinated, leading to prevent DNA-binding. Deubiquitination by USP15 alleviates inhibition and promotes activation of TGF-beta target genes. Ubiquitinated by RNF111, leading to its degradation: only SMAD2 proteins that are 'in use' are targeted by RNF111, RNF111 playing a key role in activating SMAD2 and regulating its turnover. Acetylated on Lys-19 by coactivators in response to TGF-beta signaling, which increases transcriptional activity.

It is found in the cytoplasm. It localises to the nucleus. Its function is as follows. Receptor-regulated SMAD (R-SMAD) that is an intracellular signal transducer and transcriptional modulator activated by TGF-beta (transforming growth factor) and activin type 1 receptor kinases. Binds the TRE element in the promoter region of many genes that are regulated by TGF-beta and, on formation of the SMAD2/SMAD4 complex, activates transcription. Promotes TGFB1-mediated transcription of odontoblastic differentiation genes in dental papilla cells. Positively regulates PDPK1 kinase activity by stimulating its dissociation from the 14-3-3 protein YWHAQ which acts as a negative regulator. This chain is Mothers against decapentaplegic homolog 2 (Smad2), found in Mus musculus (Mouse).